We begin with the raw amino-acid sequence, 153 residues long: Cytochrome c-type biogenesis protein CcmE (153 aa).

Over 1 to 6 the chain is Cytoplasmic; that stretch reads MNARRR. A helical; Signal-anchor for type II membrane protein membrane pass occupies residues 7-27; the sequence is LWSLLMLILAVGTAATLTIMA. At 28 to 153 the chain is on the periplasmic side; it reads LRRNLTYLYM…LDTPIAQTTP (126 aa). Heme contacts are provided by histidine 121 and tyrosine 125. Residues 130-141 are compositionally biased toward polar residues; sequence LTNKMQPTPTQH. The disordered stretch occupies residues 130–153; it reads LTNKMQPTPTQHTHLDTPIAQTTP.

This sequence belongs to the CcmE/CycJ family.

It localises to the cell inner membrane. In terms of biological role, heme chaperone required for the biogenesis of c-type cytochromes. Transiently binds heme delivered by CcmC and transfers the heme to apo-cytochromes in a process facilitated by CcmF and CcmH. This is Cytochrome c-type biogenesis protein CcmE from Xylella fastidiosa (strain 9a5c).